Reading from the N-terminus, the 372-residue chain is tRNA pseudouridine synthase D (372 aa).

Residue Asp85 is the Nucleophile of the active site. The TRUD domain maps to 160–330; that stretch reads GFANYFGYQR…MQGSRRFMWG (171 aa).

This sequence belongs to the pseudouridine synthase TruD family.

The catalysed reaction is uridine(13) in tRNA = pseudouridine(13) in tRNA. Responsible for synthesis of pseudouridine from uracil-13 in transfer RNAs. This is tRNA pseudouridine synthase D from Campylobacter jejuni subsp. jejuni serotype O:2 (strain ATCC 700819 / NCTC 11168).